The primary structure comprises 118 residues: Myotrophin (118 aa).

ANK repeat units follow at residues 1-30, 34-65, and 67-98; these read MGDKELMWALKNGDLDEVKNILVKAEDVNR, GGRKPLHYAADCGQAEMLEFLLSKGADVNAPD, and HGITPLLSATYEGHVTCVKILLEKGADKNRKG.

Belongs to the myotrophin family.

Its subcellular location is the cytoplasm. The protein resides in the nucleus. It is found in the perinuclear region. Its function is as follows. Regulates NF-kappa-B transcription factor activity. Promotes growth of cardiomyocytes, but not cardiomyocyte proliferation. Promotes cardiac muscle hypertrophy. Plays a role in the regulation of the growth of actin filaments. Inhibits the activity of the F-actin-capping protein complex. This is Myotrophin (mtpn) from Danio rerio (Zebrafish).